A 391-amino-acid chain; its full sequence is Ferrochelatase (391 aa).

Fe cation contacts are provided by histidine 196 and glutamate 281.

The protein belongs to the ferrochelatase family.

It is found in the cytoplasm. The enzyme catalyses heme b + 2 H(+) = protoporphyrin IX + Fe(2+). It functions in the pathway porphyrin-containing compound metabolism; protoheme biosynthesis; protoheme from protoporphyrin-IX: step 1/1. In terms of biological role, catalyzes the ferrous insertion into protoporphyrin IX. This Prochlorococcus marinus (strain MIT 9215) protein is Ferrochelatase.